A 515-amino-acid polypeptide reads, in one-letter code: 2-isopropylmalate synthase (515 aa).

Positions 5–267 (VIIFDTTLRD…HTNLKHDEIH (263 aa)) constitute a Pyruvate carboxyltransferase domain. Residues Asp-14, His-202, His-204, and Asn-238 each contribute to the Mn(2+) site. The regulatory domain stretch occupies residues 392–515 (KLNYLSVQSG…EIKQKKVETV (124 aa)).

Belongs to the alpha-IPM synthase/homocitrate synthase family. LeuA type 1 subfamily. As to quaternary structure, homodimer. Mn(2+) is required as a cofactor.

The protein localises to the cytoplasm. The catalysed reaction is 3-methyl-2-oxobutanoate + acetyl-CoA + H2O = (2S)-2-isopropylmalate + CoA + H(+). It participates in amino-acid biosynthesis; L-leucine biosynthesis; L-leucine from 3-methyl-2-oxobutanoate: step 1/4. Functionally, catalyzes the condensation of the acetyl group of acetyl-CoA with 3-methyl-2-oxobutanoate (2-ketoisovalerate) to form 3-carboxy-3-hydroxy-4-methylpentanoate (2-isopropylmalate). In Aliivibrio fischeri (strain MJ11) (Vibrio fischeri), this protein is 2-isopropylmalate synthase.